Here is a 289-residue protein sequence, read N- to C-terminus: tRNA pseudouridine synthase B (289 aa).

Aspartate 55 functions as the Nucleophile in the catalytic mechanism. Positions 243–289 are disordered; that stretch reads PGGVLAQHEREGSRALDSAAGNAEHDREEARIADNNREDRSRQHADR. The segment covering 265 to 289 has biased composition (basic and acidic residues); the sequence is AEHDREEARIADNNREDRSRQHADR.

It belongs to the pseudouridine synthase TruB family. Type 1 subfamily.

The catalysed reaction is uridine(55) in tRNA = pseudouridine(55) in tRNA. In terms of biological role, responsible for synthesis of pseudouridine from uracil-55 in the psi GC loop of transfer RNAs. This Chlorobium luteolum (strain DSM 273 / BCRC 81028 / 2530) (Pelodictyon luteolum) protein is tRNA pseudouridine synthase B.